Reading from the N-terminus, the 120-residue chain is Ribonuclease P protein component (120 aa).

This sequence belongs to the RnpA family. In terms of assembly, consists of a catalytic RNA component (M1 or rnpB) and a protein subunit.

It catalyses the reaction Endonucleolytic cleavage of RNA, removing 5'-extranucleotides from tRNA precursor.. In terms of biological role, RNaseP catalyzes the removal of the 5'-leader sequence from pre-tRNA to produce the mature 5'-terminus. It can also cleave other RNA substrates such as 4.5S RNA. The protein component plays an auxiliary but essential role in vivo by binding to the 5'-leader sequence and broadening the substrate specificity of the ribozyme. The sequence is that of Ribonuclease P protein component from Mycobacterium marinum (strain ATCC BAA-535 / M).